The sequence spans 465 residues: Clusterin-like protein 1 (465 aa).

The N-terminal stretch at 1-20 is a signal peptide; that stretch reads MKPSLLVFTVYLLWLKDCHC. Residues 62 to 106 are a coiled coil; that stretch reads MMERREEEHTNLMKTLKKCKEEKQEALKLMNEVQEHLEEEESLCQ. Cystine bridges form between C105–C333, C116–C325, C119–C322, and C124–C315. N-linked (GlcNAc...) asparagine glycans are attached at residues N196, N257, N285, N311, N351, N412, and N430.

Belongs to the clusterin family. Retina-specific (at protein level). In the light-adapted retina, expressed in the outer segment of cone photoreceptors. In the dark-adapted retina, strongly expressed in the outer plexiform layer in the region of contact between the cone pedicles and second order neurons with little or no expression in the cone photoreceptor outer segments.

The protein resides in the secreted. The polypeptide is Clusterin-like protein 1 (CLUL1) (Canis lupus familiaris (Dog)).